The following is a 1090-amino-acid chain: Protein transport protein Sec24A (1090 aa).

2 disordered regions span residues 1–260 (MAQP…AHNT) and 272–325 (TPQL…TQTP). Residues 8-28 (AARGAAASLQAQNGAASASGS) show a composition bias toward low complexity. Composition is skewed to polar residues over residues 29-55 (PYTNGPVHNTLMSPQVSSSQGYDSQPP), 138-151 (WQYNYPSTGPQTNH), and 162-184 (GNPNLTADHQYVSSGDPALQTSF). Over residues 194–236 (QNPPLPPTFQPGAPPGPPPAGGPPPSRGPAPQKTPPRAAPPPS) the composition is skewed to pro residues. Composition is skewed to polar residues over residues 237 to 258 (FNSAVNQEGITSNANNGSTAAH), 274 to 286 (QLVNQNPKTSRSV), and 313 to 325 (SYPSGPQAFTQTP). Residues cysteine 428, cysteine 431, cysteine 449, and cysteine 452 each contribute to the Zn(2+) site. The zinc finger-like stretch occupies residues 428 to 452 (CRSCRTYINPFVNFLDQRRWKCNLC). The Gelsolin-like repeat unit spans residues 963-1036 (PQPPILQLSV…PESARIAAFI (74 aa)).

The protein belongs to the SEC23/SEC24 family. SEC24 subfamily. As to quaternary structure, COPII is composed of at least five proteins: the Sec23/24 complex, the Sec13/31 complex and Sar1. Interacts with TMED2. Interacts (as part of the Sec23/24 complex) with SEC22B; recruits SEC22B into COPII-coated vesicles for its transport from the endoplasmic reticulum to the Golgi. Interacts with STING1; promoting STING1 translocation to COPII vesicles in a STEEP1-dependent manner. Interacts with TMEM39A. Interacts with SACM1L; this interaction is reduced in the absence of TMEM39A. Interacts with kinase FAM20C; transport of FAM20C from the endoplasmic reticulum to the Golgi is likely to be mediated by COPII vesicles.

It is found in the cytoplasmic vesicle. Its subcellular location is the COPII-coated vesicle membrane. The protein resides in the endoplasmic reticulum membrane. It localises to the cytoplasm. The protein localises to the cytosol. Functionally, component of the coat protein complex II (COPII) which promotes the formation of transport vesicles from the endoplasmic reticulum (ER). The coat has two main functions, the physical deformation of the endoplasmic reticulum membrane into vesicles and the selection of cargo molecules for their transport to the Golgi complex. Plays a central role in cargo selection within the COPII complex and together with SEC24B may have a different specificity compared to SEC24C and SEC24D. May package preferentially cargos with cytoplasmic DxE or LxxLE motifs and may also recognize conformational epitopes. The chain is Protein transport protein Sec24A from Mus musculus (Mouse).